The primary structure comprises 723 residues: Catalase-peroxidase (723 aa).

A cross-link (tryptophyl-tyrosyl-methioninium (Trp-Tyr) (with M-252)) is located at residues W98–Y226. H99 acts as the Proton acceptor in catalysis. The tryptophyl-tyrosyl-methioninium (Tyr-Met) (with W-98) cross-link spans Y226–M252. Residue H267 participates in heme b binding.

This sequence belongs to the peroxidase family. Peroxidase/catalase subfamily. Homodimer or homotetramer. It depends on heme b as a cofactor. Post-translationally, formation of the three residue Trp-Tyr-Met cross-link is important for the catalase, but not the peroxidase activity of the enzyme.

The catalysed reaction is H2O2 + AH2 = A + 2 H2O. It catalyses the reaction 2 H2O2 = O2 + 2 H2O. Functionally, bifunctional enzyme with both catalase and broad-spectrum peroxidase activity. This chain is Catalase-peroxidase, found in Vibrio vulnificus (strain CMCP6).